The sequence spans 319 residues: Acetyl-coenzyme A carboxylase carboxyl transferase subunit alpha (319 aa).

The 262-residue stretch at 32–293 (NVDTEVRALE…KAVLLNELEA (262 aa)) folds into the CoA carboxyltransferase C-terminal domain.

This sequence belongs to the AccA family. As to quaternary structure, acetyl-CoA carboxylase is a heterohexamer composed of biotin carboxyl carrier protein (AccB), biotin carboxylase (AccC) and two subunits each of ACCase subunit alpha (AccA) and ACCase subunit beta (AccD).

The protein localises to the cytoplasm. It carries out the reaction N(6)-carboxybiotinyl-L-lysyl-[protein] + acetyl-CoA = N(6)-biotinyl-L-lysyl-[protein] + malonyl-CoA. It functions in the pathway lipid metabolism; malonyl-CoA biosynthesis; malonyl-CoA from acetyl-CoA: step 1/1. Functionally, component of the acetyl coenzyme A carboxylase (ACC) complex. First, biotin carboxylase catalyzes the carboxylation of biotin on its carrier protein (BCCP) and then the CO(2) group is transferred by the carboxyltransferase to acetyl-CoA to form malonyl-CoA. The protein is Acetyl-coenzyme A carboxylase carboxyl transferase subunit alpha of Xylella fastidiosa (strain 9a5c).